Here is a 146-residue protein sequence, read N- to C-terminus: Transcriptional regulator AdcR (146 aa).

One can recognise an HTH marR-type domain in the interval 1-143; sequence MRQLAKDINA…IQRFLTALVG (143 aa). Residues glutamate 24, cysteine 30, glutamate 41, and histidine 42 each contribute to the Zn(2+) site. Residues 54–77 constitute a DNA-binding region (H-T-H motif); the sequence is NSELARRLNVSQAAVTKAIKSLVK. The Zn(2+) site is built by glutamate 107, histidine 108, and histidine 112.

In terms of assembly, homodimer.

With respect to regulation, zinc acts as a coregulator and is required for DNA-binding activity. Functionally, zinc-responsive regulator that acts both as a repressor and as an activator by regulating directly the promoters of its target genes. In the presence of zinc, directly represses the expression of the adcRCBA operon, of genes coding for a group of surface antigen zinc-binding pneumococcal histidine triad proteins (PhtA, PhtB, PhtD and PhtE), and of adcAII. Can also activate expression of adh. This chain is Transcriptional regulator AdcR (adcR), found in Streptococcus pneumoniae serotype 2 (strain D39 / NCTC 7466).